Consider the following 147-residue polypeptide: Heavy metal-dependent transcription regulator 2 (147 aa).

The HTH merR-type domain maps to 1-69 (MNIGEASKTS…VEQIKELLAL (69 aa)). The H-T-H motif DNA-binding region spans 3–22 (IGEASKTSGVSSKMIRYYEQ).

The protein resides in the cytoplasm. Transcriptional regulator involved in acid tolerance. Binds copper. This Rhizobium meliloti (strain 1021) (Ensifer meliloti) protein is Heavy metal-dependent transcription regulator 2 (hmrR2).